Here is a 121-residue protein sequence, read N- to C-terminus: Large ribosomal subunit protein bL19 (121 aa).

The protein belongs to the bacterial ribosomal protein bL19 family.

Its function is as follows. This protein is located at the 30S-50S ribosomal subunit interface and may play a role in the structure and function of the aminoacyl-tRNA binding site. The sequence is that of Large ribosomal subunit protein bL19 from Chloroherpeton thalassium (strain ATCC 35110 / GB-78).